The following is a 144-amino-acid chain: D-aminoacyl-tRNA deacylase (144 aa).

Residues 136–137 carry the Gly-cisPro motif, important for rejection of L-amino acids motif; it reads GP.

Belongs to the DTD family. In terms of assembly, homodimer.

The protein resides in the cytoplasm. It carries out the reaction glycyl-tRNA(Ala) + H2O = tRNA(Ala) + glycine + H(+). It catalyses the reaction a D-aminoacyl-tRNA + H2O = a tRNA + a D-alpha-amino acid + H(+). In terms of biological role, an aminoacyl-tRNA editing enzyme that deacylates mischarged D-aminoacyl-tRNAs. Also deacylates mischarged glycyl-tRNA(Ala), protecting cells against glycine mischarging by AlaRS. Acts via tRNA-based rather than protein-based catalysis; rejects L-amino acids rather than detecting D-amino acids in the active site. By recycling D-aminoacyl-tRNA to D-amino acids and free tRNA molecules, this enzyme counteracts the toxicity associated with the formation of D-aminoacyl-tRNA entities in vivo and helps enforce protein L-homochirality. The chain is D-aminoacyl-tRNA deacylase from Actinobacillus pleuropneumoniae serotype 5b (strain L20).